The sequence spans 54 residues: UPF0391 membrane protein Pnap_0920 (54 aa).

A run of 2 helical transmembrane segments spans residues 6–26 and 30–50; these read VVFLVIALIAAVFGFGGIAAG and IAKILFFLFAIMAIVSFVVSL.

This sequence belongs to the UPF0391 family.

Its subcellular location is the cell membrane. The chain is UPF0391 membrane protein Pnap_0920 from Polaromonas naphthalenivorans (strain CJ2).